Consider the following 76-residue polypeptide: Exodeoxyribonuclease 7 small subunit (76 aa).

It belongs to the XseB family. As to quaternary structure, heterooligomer composed of large and small subunits.

The protein localises to the cytoplasm. It carries out the reaction Exonucleolytic cleavage in either 5'- to 3'- or 3'- to 5'-direction to yield nucleoside 5'-phosphates.. Its function is as follows. Bidirectionally degrades single-stranded DNA into large acid-insoluble oligonucleotides, which are then degraded further into small acid-soluble oligonucleotides. The polypeptide is Exodeoxyribonuclease 7 small subunit (Enterococcus faecalis (strain ATCC 700802 / V583)).